We begin with the raw amino-acid sequence, 188 residues long: Elongation factor P (188 aa).

Lys34 carries the post-translational modification N6-(3,6-diaminohexanoyl)-5-hydroxylysine.

The protein belongs to the elongation factor P family. May be beta-lysylated on the epsilon-amino group of Lys-34 by the combined action of EpmA and EpmB, and then hydroxylated on the C5 position of the same residue by EpmC (if this protein is present). Lysylation is critical for the stimulatory effect of EF-P on peptide-bond formation. The lysylation moiety may extend toward the peptidyltransferase center and stabilize the terminal 3-CCA end of the tRNA. Hydroxylation of the C5 position on Lys-34 may allow additional potential stabilizing hydrogen-bond interactions with the P-tRNA.

It is found in the cytoplasm. It functions in the pathway protein biosynthesis; polypeptide chain elongation. In terms of biological role, involved in peptide bond synthesis. Alleviates ribosome stalling that occurs when 3 or more consecutive Pro residues or the sequence PPG is present in a protein, possibly by augmenting the peptidyl transferase activity of the ribosome. Modification of Lys-34 is required for alleviation. This is Elongation factor P from Pseudoalteromonas translucida (strain TAC 125).